We begin with the raw amino-acid sequence, 121 residues long: Small ribosomal subunit protein uS13 (121 aa).

The interval 90–121 (RHRRGLPVRGQHTKNNARTRKGKKVSIAGRKK) is disordered.

It belongs to the universal ribosomal protein uS13 family. Part of the 30S ribosomal subunit. Forms a loose heterodimer with protein S19. Forms two bridges to the 50S subunit in the 70S ribosome.

In terms of biological role, located at the top of the head of the 30S subunit, it contacts several helices of the 16S rRNA. In the 70S ribosome it contacts the 23S rRNA (bridge B1a) and protein L5 of the 50S subunit (bridge B1b), connecting the 2 subunits; these bridges are implicated in subunit movement. Contacts the tRNAs in the A and P-sites. In Lactiplantibacillus plantarum (strain ATCC BAA-793 / NCIMB 8826 / WCFS1) (Lactobacillus plantarum), this protein is Small ribosomal subunit protein uS13.